The primary structure comprises 474 residues: 3-isopropylmalate dehydratase large subunit (474 aa).

Cys-353, Cys-414, and Cys-417 together coordinate [4Fe-4S] cluster.

This sequence belongs to the aconitase/IPM isomerase family. LeuC type 1 subfamily. In terms of assembly, heterodimer of LeuC and LeuD. [4Fe-4S] cluster is required as a cofactor.

It carries out the reaction (2R,3S)-3-isopropylmalate = (2S)-2-isopropylmalate. Its pathway is amino-acid biosynthesis; L-leucine biosynthesis; L-leucine from 3-methyl-2-oxobutanoate: step 2/4. Its function is as follows. Catalyzes the isomerization between 2-isopropylmalate and 3-isopropylmalate, via the formation of 2-isopropylmaleate. This is 3-isopropylmalate dehydratase large subunit from Xylella fastidiosa (strain 9a5c).